The sequence spans 272 residues: Orotidine 5'-phosphate decarboxylase (272 aa).

K93 acts as the Proton donor in catalysis.

This sequence belongs to the OMP decarboxylase family. Type 2 subfamily.

The catalysed reaction is orotidine 5'-phosphate + H(+) = UMP + CO2. Its pathway is pyrimidine metabolism; UMP biosynthesis via de novo pathway; UMP from orotate: step 2/2. In Roseiflexus castenholzii (strain DSM 13941 / HLO8), this protein is Orotidine 5'-phosphate decarboxylase.